The chain runs to 73 residues: DNA-directed RNA polymerase subunit Rpo10 (73 aa).

Residues Cys7, Cys10, Cys44, and Cys45 each coordinate Zn(2+).

This sequence belongs to the archaeal Rpo10/eukaryotic RPB10 RNA polymerase subunit family. Part of the RNA polymerase complex. Forms an Rpo3-Rpo10-Rpo11-Rpo12 complex upon coexpression. Zn(2+) serves as cofactor.

Its subcellular location is the cytoplasm. The enzyme catalyses RNA(n) + a ribonucleoside 5'-triphosphate = RNA(n+1) + diphosphate. Its function is as follows. DNA-dependent RNA polymerase (RNAP) catalyzes the transcription of DNA into RNA using the four ribonucleoside triphosphates as substrates. This is DNA-directed RNA polymerase subunit Rpo10 from Methanocaldococcus jannaschii (strain ATCC 43067 / DSM 2661 / JAL-1 / JCM 10045 / NBRC 100440) (Methanococcus jannaschii).